A 377-amino-acid chain; its full sequence is Tubulin--tyrosine ligase (377 aa).

Residues 3-370 (TFVVRQENSS…PPDTEQVPQQ (368 aa)) enclose the TTL domain.

It belongs to the tubulin--tyrosine ligase family. In terms of assembly, monomer. Mg(2+) is required as a cofactor. Requires K(+) as cofactor.

The enzyme catalyses C-terminal L-alpha-aminoacyl-L-glutamyl-L-glutamyl-[tubulin] + L-tyrosine + ATP = C-terminal L-alpha-aminoacyl-L-glutamyl-L-glutamyl-L-tyrosyl-[tubulin] + ADP + phosphate + H(+). In terms of biological role, catalyzes the post-translational addition of a tyrosine to the C-terminal end of detyrosinated alpha-tubulin. The chain is Tubulin--tyrosine ligase (Ttl) from Rattus norvegicus (Rat).